We begin with the raw amino-acid sequence, 102 residues long: Small ribosomal subunit protein uS10 (102 aa).

Belongs to the universal ribosomal protein uS10 family. As to quaternary structure, part of the 30S ribosomal subunit.

In terms of biological role, involved in the binding of tRNA to the ribosomes. The polypeptide is Small ribosomal subunit protein uS10 (Saccharolobus islandicus (strain M.16.4 / Kamchatka #3) (Sulfolobus islandicus)).